Consider the following 256-residue polypeptide: Acetyl-coenzyme A carboxylase carboxyl transferase subunit beta 2 (256 aa).

A CoA carboxyltransferase N-terminal domain is found at 1-256; the sequence is MTVKCNKCKE…LAIHAETVSA (256 aa). Positions 5, 8, 24, and 27 each coordinate Zn(2+). Residues 5–27 form a C4-type zinc finger; that stretch reads CNKCKEEINKEDLEKNYYICPLC.

This sequence belongs to the AccD/PCCB family. Acetyl-CoA carboxylase is a heterohexamer composed of biotin carboxyl carrier protein (AccB), biotin carboxylase (AccC) and two subunits each of ACCase subunit alpha (AccA) and ACCase subunit beta (AccD). It depends on Zn(2+) as a cofactor.

Its subcellular location is the cytoplasm. The enzyme catalyses N(6)-carboxybiotinyl-L-lysyl-[protein] + acetyl-CoA = N(6)-biotinyl-L-lysyl-[protein] + malonyl-CoA. It participates in lipid metabolism; malonyl-CoA biosynthesis; malonyl-CoA from acetyl-CoA: step 1/1. Component of the acetyl coenzyme A carboxylase (ACC) complex. Biotin carboxylase (BC) catalyzes the carboxylation of biotin on its carrier protein (BCCP) and then the CO(2) group is transferred by the transcarboxylase to acetyl-CoA to form malonyl-CoA. The protein is Acetyl-coenzyme A carboxylase carboxyl transferase subunit beta 2 of Lachnospira eligens (strain ATCC 27750 / DSM 3376 / VPI C15-48 / C15-B4) (Eubacterium eligens).